A 532-amino-acid polypeptide reads, in one-letter code: Nectin-4 (532 aa).

A signal peptide spans 1–30 (MGPLHGALLPPISVTVSLLILLLCAPGGRC). In terms of domain architecture, Ig-like V-type spans 31-142 (GVVHTEKSMT…GNFDAELELK (112 aa)). Residues 31 to 344 (GVVHTEKSMT…TKIDLVSVSL (314 aa)) lie on the Extracellular side of the membrane. Cystine bridges form between cysteine 51–cysteine 125, cysteine 169–cysteine 221, and cysteine 266–cysteine 312. 2 Ig-like C2-type domains span residues 146-235 (PPLP…KRIT) and 244-328 (AEVS…AIVS). The tract at residues 152-179 (GPGPPLTEGEGKSLAASCTAEGNPAPTL) is disordered. 2 N-linked (GlcNAc...) asparagine glycosylation sites follow: asparagine 189 and asparagine 282. A helical membrane pass occupies residues 345 to 365 (GSVGILTAVLLVVLVITLLLV). At 366-532 (NRHHKRQTKQ…IYINGRGHLV (167 aa)) the chain is on the cytoplasmic side. The disordered stretch occupies residues 453–491 (QTELLSTVPDEEVKEDGEEPEQVEQSLEKEPNPTEPDGM). Acidic residues predominate over residues 461 to 474 (PDEEVKEDGEEPEQ).

Belongs to the nectin family.

It localises to the cell membrane. Functionally, may be involved in cell adhesion. In Xenopus tropicalis (Western clawed frog), this protein is Nectin-4.